The primary structure comprises 140 residues: Sex-regulated protein janus-B (140 aa).

Arg-42 is a substrate binding site. His-69 functions as the Proton acceptor in the catalytic mechanism. 110–112 (SRT) lines the substrate pocket.

The protein belongs to the janus family. In terms of tissue distribution, germline cells of adult males.

Functionally, janA and janB regulate somatic sex differentiation. The sequence is that of Sex-regulated protein janus-B (janB) from Drosophila melanogaster (Fruit fly).